The following is a 659-amino-acid chain: Nicastrin (659 aa).

The first 22 residues, 1–22 (MKIKNYFIIVFIIIVLSTDVIS), serve as a signal peptide directing secretion. Over 23–627 (SQSSIEDKMY…LFQVGSYANE (605 aa)) the chain is Extracellular. Asn-94, Asn-172, Asn-305, Asn-389, Asn-451, Asn-475, Asn-550, Asn-553, and Asn-600 each carry an N-linked (GlcNAc...) asparagine glycan. Residues 628–648 (IWFLVSGLIELLLSVGIIFYI) traverse the membrane as a helical segment. Over 649-659 (KKYLSKRYKLL) the chain is Cytoplasmic.

It belongs to the nicastrin family. As to quaternary structure, homodimer. Component of the gamma-secretase complex, a complex composed of a presenilin homodimer, nicastrin, aph1 and pen2.

It is found in the membrane. Functionally, essential subunit of the gamma-secretase complex, an endoprotease complex that catalyzes the intramembrane cleavage of integral membrane proteins such as Notch receptors and APP (amyloid-beta precursor protein). It probably represents a stabilizing cofactor required for the assembly of the gamma-secretase complex. This Dictyostelium discoideum (Social amoeba) protein is Nicastrin (ncstn).